We begin with the raw amino-acid sequence, 533 residues long: D-3-phosphoglycerate dehydrogenase (533 aa).

An N-acetylalanine modification is found at Ala2. Residue Ser14 is modified to Phosphoserine. N6-acetyllysine; alternate is present on Lys21. Lys21 is covalently cross-linked (Glycyl lysine isopeptide (Lys-Gly) (interchain with G-Cter in SUMO1); alternate). A Glycyl lysine isopeptide (Lys-Gly) (interchain with G-Cter in SUMO2); alternate cross-link involves residue Lys21. Lys58 is modified (N6-acetyllysine). Residues Thr78, Arg155–Ile156, Asp175, Thr207, Cys234–Arg236, and Asp260 contribute to the NAD(+) site. Thr78 is subject to Phosphothreonine. Arg236 is an active-site residue. Glu265 is a catalytic residue. Residue His283 is the Proton donor of the active site. Residue His283–Ala286 coordinates NAD(+).

It belongs to the D-isomer specific 2-hydroxyacid dehydrogenase family. As to quaternary structure, homotetramer.

The catalysed reaction is (2R)-3-phosphoglycerate + NAD(+) = 3-phosphooxypyruvate + NADH + H(+). It carries out the reaction (R)-2-hydroxyglutarate + NAD(+) = 2-oxoglutarate + NADH + H(+). The enzyme catalyses (S)-malate + NAD(+) = oxaloacetate + NADH + H(+). Its pathway is amino-acid biosynthesis; L-serine biosynthesis; L-serine from 3-phospho-D-glycerate: step 1/3. In terms of biological role, catalyzes the reversible oxidation of 3-phospho-D-glycerate to 3-phosphonooxypyruvate, the first step of the phosphorylated L-serine biosynthesis pathway. Also catalyzes the reversible oxidation of 2-hydroxyglutarate to 2-oxoglutarate and the reversible oxidation of (S)-malate to oxaloacetate. The chain is D-3-phosphoglycerate dehydrogenase (PHGDH) from Pongo abelii (Sumatran orangutan).